The chain runs to 1106 residues: Carbamoyl phosphate synthase large chain (1106 aa).

The tract at residues 1–402 (MPKREDLKSV…ALQKALRSLE (402 aa)) is carboxyphosphate synthetic domain. Positions 129, 169, 175, 176, 208, 210, 215, 241, 242, 243, 285, and 299 each coordinate ATP. In terms of domain architecture, ATP-grasp 1 spans 133 to 328 (KGVVERCGAE…IAKIATKLSL (196 aa)). The Mg(2+) site is built by glutamine 285, glutamate 299, and asparagine 301. Positions 285, 299, and 301 each coordinate Mn(2+). Residues 403-546 (QKGSQLDFGS…YHYSSYDQED (144 aa)) are oligomerization domain. The interval 547-956 (EIALHEKPSV…AFAKSQAAAN (410 aa)) is carbamoyl phosphate synthetic domain. Residues 677–868 (ARVLDIAGLI…LAKAAALIGT (192 aa)) form the ATP-grasp 2 domain. ATP-binding residues include arginine 713, arginine 752, leucine 754, glutamate 759, glycine 784, isoleucine 785, histidine 786, serine 787, glutamine 827, and glutamate 839. Mg(2+) contacts are provided by glutamine 827, glutamate 839, and asparagine 841. Residues glutamine 827, glutamate 839, and asparagine 841 each contribute to the Mn(2+) site. An MGS-like domain is found at 957-1106 (NALPTEGKVF…EALLEAAANV (150 aa)). The interval 957 to 1106 (NALPTEGKVF…EALLEAAANV (150 aa)) is allosteric domain.

This sequence belongs to the CarB family. Composed of two chains; the small (or glutamine) chain promotes the hydrolysis of glutamine to ammonia, which is used by the large (or ammonia) chain to synthesize carbamoyl phosphate. Tetramer of heterodimers (alpha,beta)4. The cofactor is Mg(2+). Mn(2+) serves as cofactor.

The enzyme catalyses hydrogencarbonate + L-glutamine + 2 ATP + H2O = carbamoyl phosphate + L-glutamate + 2 ADP + phosphate + 2 H(+). It catalyses the reaction hydrogencarbonate + NH4(+) + 2 ATP = carbamoyl phosphate + 2 ADP + phosphate + 2 H(+). The protein operates within amino-acid biosynthesis; L-arginine biosynthesis; carbamoyl phosphate from bicarbonate: step 1/1. Its pathway is pyrimidine metabolism; UMP biosynthesis via de novo pathway; (S)-dihydroorotate from bicarbonate: step 1/3. In terms of biological role, large subunit of the glutamine-dependent carbamoyl phosphate synthetase (CPSase). CPSase catalyzes the formation of carbamoyl phosphate from the ammonia moiety of glutamine, carbonate, and phosphate donated by ATP, constituting the first step of 2 biosynthetic pathways, one leading to arginine and/or urea and the other to pyrimidine nucleotides. The large subunit (synthetase) binds the substrates ammonia (free or transferred from glutamine from the small subunit), hydrogencarbonate and ATP and carries out an ATP-coupled ligase reaction, activating hydrogencarbonate by forming carboxy phosphate which reacts with ammonia to form carbamoyl phosphate. This chain is Carbamoyl phosphate synthase large chain, found in Renibacterium salmoninarum (strain ATCC 33209 / DSM 20767 / JCM 11484 / NBRC 15589 / NCIMB 2235).